A 522-amino-acid polypeptide reads, in one-letter code: Major facilitator-type transporter sorT (522 aa).

The tract at residues 1–21 (MSHTEPKAPVNTGEVENGHLY) is disordered. 12 helical membrane-spanning segments follow: residues 52–72 (WFIA…SSAY), 89–109 (VFIV…AVWA), 121–141 (QILW…SAGS), 143–163 (NVAT…SPLV), 183–203 (TIYC…GGFV), 211–231 (WVQG…IVFI), 280–300 (WIFL…AIIY), 324–344 (IGGL…VYAI), 366–386 (LPPA…FAWT), 395–415 (VSII…LPIM), 427–447 (ASVL…FPLF), and 457–477 (IHWA…FPLI).

Belongs to the major facilitator superfamily. Sugar transporter (TC 2.A.1.1) family.

It is found in the membrane. Its function is as follows. Major facilitator-type transporter; part of the gene cluster that mediates the biosynthesis of sorbicillinoids, a diverse group of yellow secondary metabolites that restrict growth of competing pathogenic fungi but not of bacteria. This Penicillium rubens (strain ATCC 28089 / DSM 1075 / NRRL 1951 / Wisconsin 54-1255) (Penicillium chrysogenum) protein is Major facilitator-type transporter sorT.